The chain runs to 359 residues: Nicotinate-nucleotide--dimethylbenzimidazole phosphoribosyltransferase (359 aa).

Catalysis depends on Glu-318, which acts as the Proton acceptor.

Belongs to the CobT family. In terms of assembly, homodimer.

It carries out the reaction 5,6-dimethylbenzimidazole + nicotinate beta-D-ribonucleotide = alpha-ribazole 5'-phosphate + nicotinate + H(+). The protein operates within nucleoside biosynthesis; alpha-ribazole biosynthesis; alpha-ribazole from 5,6-dimethylbenzimidazole: step 1/2. In terms of biological role, catalyzes the synthesis of alpha-ribazole-5'-phosphate from nicotinate mononucleotide (NAMN) and 5,6-dimethylbenzimidazole (DMB). The polypeptide is Nicotinate-nucleotide--dimethylbenzimidazole phosphoribosyltransferase (Escherichia coli O17:K52:H18 (strain UMN026 / ExPEC)).